Reading from the N-terminus, the 204-residue chain is MSRGALIVFEGLDKSGKTTQCMNIMESILANTIKYLNFPQRSTVTGKMIDDYLTRKKTYNDHIVNLLFCANRWEFASFIQEQLEQGITLIVDRYAFSGVAYAAAKGASMTLSKSYEFGLPKPDLVIFLESGSKEINKNVGEEIYEDVAFQQKVLQEYKKMIEEGDIHWQIISSEFEEDVKKELIKNIVIEAIHTVTGPVGQLWM.

Residue 11-18 (GLDKSGKT) coordinates ATP.

This sequence belongs to the thymidylate kinase family.

The catalysed reaction is dTMP + ATP = dTDP + ADP. It functions in the pathway pyrimidine metabolism; dTTP biosynthesis. This chain is Thymidylate kinase (TMK), found in Camelus.